We begin with the raw amino-acid sequence, 102 residues long: Urease subunit beta (102 aa).

It belongs to the urease beta subunit family. In terms of assembly, heterotrimer of UreA (gamma), UreB (beta) and UreC (alpha) subunits. Three heterotrimers associate to form the active enzyme.

Its subcellular location is the cytoplasm. It carries out the reaction urea + 2 H2O + H(+) = hydrogencarbonate + 2 NH4(+). The protein operates within nitrogen metabolism; urea degradation; CO(2) and NH(3) from urea (urease route): step 1/1. This Blochmanniella pennsylvanica (strain BPEN) protein is Urease subunit beta.